The chain runs to 354 residues: 5,10-methenyltetrahydromethanopterin hydrogenase (354 aa).

Belongs to the HMD family.

The enzyme catalyses 5,10-methenyl-5,6,7,8-tetrahydromethanopterin + H2 = 5,10-methylenetetrahydromethanopterin + H(+). Its pathway is one-carbon metabolism; methanogenesis from CO(2); 5,10-methylene-5,6,7,8-tetrahydromethanopterin from 5,10-methenyl-5,6,7,8-tetrahydromethanopterin (hydrogen route): step 1/1. Its function is as follows. Catalyzes the reversible reduction of methenyl-H(4)MPT(+) to methylene-H(4)MPT. The polypeptide is 5,10-methenyltetrahydromethanopterin hydrogenase (Methanococcus maripaludis (strain C5 / ATCC BAA-1333)).